A 128-amino-acid polypeptide reads, in one-letter code: Protein BEX2 (128 aa).

The segment at 1 to 44 is disordered; it reads MMPKEEQVLKNLTMENANEENEKKDEKEQDANKGEPLALSLGAG. Over residues 20 to 33 the composition is skewed to basic and acidic residues; it reads ENEKKDEKEQDANK. Arg-50 carries the omega-N-methylarginine modification. The disordered stretch occupies residues 103–128; that stretch reads QLSHSLRAVSTDPPHHEHNDEFCLMP. A compositionally biased stretch (basic and acidic residues) spans 115 to 128; the sequence is PPHHEHNDEFCLMP. Positions 117–121 are his cluster; the sequence is HHEHN. Zn(2+) is bound at residue Cys-125.

It belongs to the BEX family. In terms of assembly, interacts with LMO2, possibly leading to regulate the transcriptional activity of a DNA-binding complex containing LMO2. Interacts with OMP.

The protein localises to the cytoplasm. It localises to the nucleus. Regulator of mitochondrial apoptosis and G1 cell cycle. Regulates the level of PP2A regulatory subunit B and PP2A phosphatase activity. In absence of reductive stress, acts as a pseudosubstrate for the CRL2(FEM1B) complex: associates with FEM1B via zinc, thereby preventing association between FEM1B and its substrates. This is Protein BEX2 (BEX2) from Bos taurus (Bovine).